The primary structure comprises 337 residues: Pentalenene synthase (337 aa).

2 residues coordinate Mg(2+): aspartate 80 and aspartate 84. A DDXXD motif motif is present at residues 80-84 (DDLFD). Cysteine 128 and cysteine 136 are joined by a disulfide. Mg(2+) contacts are provided by asparagine 219, serine 223, and glutamate 227.

The protein belongs to the terpene synthase family. Monomer. Mg(2+) is required as a cofactor.

The catalysed reaction is (2E,6E)-farnesyl diphosphate = pentalenene + diphosphate. Its pathway is sesquiterpene biosynthesis; pentalenene biosynthesis; pentalenene from farnesyl diphosphate: step 1/1. It functions in the pathway antibiotic biosynthesis; pentalenolactone biosynthesis. Its function is as follows. Catalyzes the cyclization of farnesyl diphosphate (FPP) to the tricyclic sesquiterpene pentalenene, which is the hydrocarbon precursor of the pentalenolactone family of antibiotics produced by a variety of Streptomyces species. The protein is Pentalenene synthase (penA) of Streptomyces exfoliatus (Streptomyces hydrogenans).